Consider the following 1602-residue polypeptide: Mediator of RNA polymerase II transcription subunit 26 (1602 aa).

The TFIIS N-terminal domain occupies 8 to 85; that stretch reads QLTSHLSQAL…KMWREMVGIQ (78 aa). Disordered stretches follow at residues 86–108, 238–298, 399–481, 580–617, and 694–736; these read QTANDSQHHHSQPTSLPTPPSAH, VTDS…AQNE, EDSI…KGVD, FSNKNEDAGNTDSDTITSEPSQDSNKSQEIKECTSLDS, and SDNG…MDTP. The span at 273–285 shows a compositional bias: basic residues; the sequence is RPKKFKKDKKHKE. Over residues 401 to 414 the composition is skewed to polar residues; that stretch reads SITNDSSTSCSRLS. Residues 418–431 are compositionally biased toward basic and acidic residues; it reads VEERRKSDKIDDSI. The span at 467–477 shows a compositional bias: basic residues; sequence VPKKRGRKKGS. Over residues 587–604 the composition is skewed to polar residues; that stretch reads AGNTDSDTITSEPSQDSN. The segment covering 715–728 has biased composition (basic and acidic residues); sequence KQEEQLPKLERLSD. Positions 792-820 form a coiled coil; sequence LDVASVNADTVQNQINSHNQEGETSEEQN. Disordered stretches follow at residues 1035-1158 and 1372-1407; these read FEET…EVEN and NTSAERTVSEDPLKIEEDPYLTSSSNDVTDSDNESD. Residues 1056 to 1070 show a composition bias toward low complexity; that stretch reads SSSSNSSCSNSSNSS. Basic and acidic residues predominate over residues 1073 to 1083; the sequence is KTQDSINEKLR. Residues 1101–1112 are compositionally biased toward basic residues; the sequence is RKRRGKNRKKRN. The span at 1124 to 1143 shows a compositional bias: low complexity; that stretch reads ISLNGTISNLSSSNNSSSSE. Acidic residues predominate over residues 1144–1158; that stretch reads SETETGLENENEVEN. Residues 1378-1388 are compositionally biased toward basic and acidic residues; sequence TVSEDPLKIEE.

It belongs to the Mediator complex subunit 26 family. Component of the Mediator complex.

It is found in the nucleus. Its function is as follows. Component of the Mediator complex, a coactivator involved in the regulated transcription of nearly all RNA polymerase II-dependent genes. Mediator functions as a bridge to convey information from gene-specific regulatory proteins to the basal RNA polymerase II transcription machinery. Mediator is recruited to promoters by direct interactions with regulatory proteins and serves as a scaffold for the assembly of a functional preinitiation complex with RNA polymerase II and the general transcription factors. The chain is Mediator of RNA polymerase II transcription subunit 26 (MED26) from Drosophila pseudoobscura pseudoobscura (Fruit fly).